The primary structure comprises 510 residues: Internal alternative NAD(P)H-ubiquinone oxidoreductase A1, mitochondrial (510 aa).

Residues 1–48 (MLWIKNLARISQTTSSSVGNVFRNPESYTLSSRFCTALQKQQVTDTVQ) constitute a mitochondrion transit peptide. Position 75-105 (75-105 (RVLVLGSGWAGCRVLKGIDTSIYDVVCVSPR)) interacts with FAD. Residue 242-278 (LHCVVVGGGPTGVEFSGELSDFIMKDVRQRYSHVKDD) participates in NAD(+) binding. The Microbody targeting signal motif lies at 501–510 (FVFGRDISRI).

This sequence belongs to the NADH dehydrogenase family. Requires FAD as cofactor. As to expression, expressed in seedlings, cotyledons, young leaves, stems and flowers and, to a lower extent, in roots and buds.

It localises to the mitochondrion inner membrane. The protein localises to the peroxisome. It catalyses the reaction a quinone + NADH + H(+) = a quinol + NAD(+). It carries out the reaction a ubiquinone + NADH + H(+) = a ubiquinol + NAD(+). Its function is as follows. Alternative NADH-ubiquinone oxidoreductase which catalyzes the oxidation of mitochondrial NADH does not translocate protons across the inner mitochondrial membrane. The protein is Internal alternative NAD(P)H-ubiquinone oxidoreductase A1, mitochondrial (NDA1) of Arabidopsis thaliana (Mouse-ear cress).